The chain runs to 325 residues: uncharacterized protein (325 aa).

2 disordered regions span residues 32-65 (LSTP…VPPI) and 99-152 (GDSL…ASSG). The Globin domain occupies 153–291 (LVPSLNRLRI…LFTGVRDGYY (139 aa)).

This is an uncharacterized protein from Caenorhabditis elegans.